Here is a 65-residue protein sequence, read N- to C-terminus: Large ribosomal subunit protein uL29 (65 aa).

This sequence belongs to the universal ribosomal protein uL29 family.

In Acinetobacter baumannii (strain AB307-0294), this protein is Large ribosomal subunit protein uL29.